Consider the following 87-residue polypeptide: uncharacterized protein (87 aa).

This is an uncharacterized protein from Autographa californica nuclear polyhedrosis virus (AcMNPV).